A 523-amino-acid polypeptide reads, in one-letter code: UDP-glucuronosyltransferase 3A2 (523 aa).

The N-terminal stretch at 1 to 22 is a signal peptide; sequence MAAHRRWLLMSFLFLEVILLEA. Topologically, residues 23–487 are extracellular; sequence AKILTISTLS…QPWHEQYMLD (465 aa). Asn-52 is a glycosylation site (N-linked (GlcNAc...) asparagine). A helical transmembrane segment spans residues 488–508; sequence VFLFLLGLMLGTLWLSVKVLV. Over 509–523 the chain is Cytoplasmic; the sequence is AVTRYLSIATKVKEA.

It belongs to the UDP-glycosyltransferase family. In terms of tissue distribution, highly expressed in kidney, while it is expressed at low levels in liver. Not detected in other tissues examined.

Its subcellular location is the membrane. It catalyses the reaction glucuronate acceptor + UDP-alpha-D-glucuronate = acceptor beta-D-glucuronoside + UDP + H(+). Its function is as follows. UDP-glucuronosyltransferases catalyze phase II biotransformation reactions in which lipophilic substrates are conjugated with glucuronic acid to increase water solubility and enhance excretion. They are of major importance in the conjugation and subsequent elimination of potentially toxic xenobiotics and endogenous compounds. This is UDP-glucuronosyltransferase 3A2 (Ugt3a2) from Mus musculus (Mouse).